The primary structure comprises 151 residues: Apolipoprotein A-I (151 aa).

Positions 1-18 are cleaved as a signal peptide; that stretch reads MKAVVLTLAVLFLTGSQA. A propeptide spanning residues 19-24 is cleaved from the precursor; it reads RHFWQQ. A run of 2 repeats spans residues 67–88 and 89–110. The segment at 67-143 is 4 X approximate tandem repeats; that stretch reads LKLLDNWDTL…EVELYRQKVA (77 aa). Residue methionine 109 is modified to Methionine sulfoxide. A 3; half-length repeat occupies 111–121; sequence KDLEEVKQKVQ. Repeat 4 spans residues 122-143; the sequence is PYLDDFQKKWQEEVELYRQKVA.

Belongs to the apolipoprotein A1/A4/E family. As to quaternary structure, homodimer. Interacts with APOA1BP and CLU. Component of a sperm activating protein complex (SPAP), consisting of APOA1, an immunoglobulin heavy chain, an immunoglobulin light chain and albumin. Interacts with NDRG1. Interacts with SCGB3A2. Interacts with NAXE and YJEFN3. Post-translationally, glycosylated. Palmitoylated. In terms of processing, phosphorylation sites are present in the extracellular medium. In terms of tissue distribution, major protein of plasma HDL, also found in chylomicrons.

The protein localises to the secreted. Its function is as follows. Participates in the reverse transport of cholesterol from tissues to the liver for excretion by promoting cholesterol efflux from tissues and by acting as a cofactor for the lecithin cholesterol acyltransferase (LCAT). As part of the SPAP complex, activates spermatozoa motility. The polypeptide is Apolipoprotein A-I (APOA1) (Panthera tigris altaica (Siberian tiger)).